Here is a 382-residue protein sequence, read N- to C-terminus: Galactokinase (382 aa).

34 to 37 (EHTD) provides a ligand contact to substrate. 124–130 (GAGLSSS) contacts ATP. The Mg(2+) site is built by Ser130 and Glu162. The active-site Proton acceptor is the Asp174. Tyr223 provides a ligand contact to substrate.

It belongs to the GHMP kinase family. GalK subfamily.

Its subcellular location is the cytoplasm. The catalysed reaction is alpha-D-galactose + ATP = alpha-D-galactose 1-phosphate + ADP + H(+). It participates in carbohydrate metabolism; galactose metabolism. Its function is as follows. Catalyzes the transfer of the gamma-phosphate of ATP to D-galactose to form alpha-D-galactose-1-phosphate (Gal-1-P). This is Galactokinase from Aeromonas hydrophila subsp. hydrophila (strain ATCC 7966 / DSM 30187 / BCRC 13018 / CCUG 14551 / JCM 1027 / KCTC 2358 / NCIMB 9240 / NCTC 8049).